The following is a 319-amino-acid chain: ATP-dependent 6-phosphofructokinase (319 aa).

Position 11 (Gly11) interacts with ATP. An ADP-binding site is contributed by 21-25 (RAVVR). ATP-binding positions include 72–73 (RS) and 102–105 (GDGS). Mg(2+) is bound at residue Asp103. 125 to 127 (TID) lines the substrate pocket. The active-site Proton acceptor is Asp127. Arg154 is an ADP binding site. Substrate is bound by residues Arg162 and 169-171 (MGR). Residues 185–187 (GAE), Arg211, and 213–215 (KKH) each bind ADP. Residues Glu222, Arg243, and 249–252 (HVQR) each bind substrate.

Belongs to the phosphofructokinase type A (PFKA) family. ATP-dependent PFK group I subfamily. Prokaryotic clade 'B1' sub-subfamily. Homotetramer. It depends on Mg(2+) as a cofactor.

It is found in the cytoplasm. The catalysed reaction is beta-D-fructose 6-phosphate + ATP = beta-D-fructose 1,6-bisphosphate + ADP + H(+). It functions in the pathway carbohydrate degradation; glycolysis; D-glyceraldehyde 3-phosphate and glycerone phosphate from D-glucose: step 3/4. Its activity is regulated as follows. Allosterically activated by ADP and other diphosphonucleosides, and allosterically inhibited by phosphoenolpyruvate. In terms of biological role, catalyzes the phosphorylation of D-fructose 6-phosphate to fructose 1,6-bisphosphate by ATP, the first committing step of glycolysis. The sequence is that of ATP-dependent 6-phosphofructokinase from Natranaerobius thermophilus (strain ATCC BAA-1301 / DSM 18059 / JW/NM-WN-LF).